Consider the following 379-residue polypeptide: Protein RecA (379 aa).

79 to 86 is a binding site for ATP; the sequence is GPESSGKT.

This sequence belongs to the RecA family.

The protein resides in the cytoplasm. In terms of biological role, can catalyze the hydrolysis of ATP in the presence of single-stranded DNA, the ATP-dependent uptake of single-stranded DNA by duplex DNA, and the ATP-dependent hybridization of homologous single-stranded DNAs. It interacts with LexA causing its activation and leading to its autocatalytic cleavage. The protein is Protein RecA of Streptococcus agalactiae serotype III (strain NEM316).